Consider the following 457-residue polypeptide: Siroheme synthase (457 aa).

The precorrin-2 dehydrogenase /sirohydrochlorin ferrochelatase stretch occupies residues 1–204 (MDHLPIFCQL…NDQKAITETT (204 aa)). NAD(+) is bound by residues 22 to 23 (DV) and 43 to 44 (LA). Ser128 carries the post-translational modification Phosphoserine. The uroporphyrinogen-III C-methyltransferase stretch occupies residues 216–457 (GEVVLVGAGP…RDKLNWFSNH (242 aa)). Residue Pro225 participates in S-adenosyl-L-methionine binding. Asp248 serves as the catalytic Proton acceptor. The active-site Proton donor is Lys270. Residues 301-303 (GGD), Ile306, 331-332 (TA), Met382, and Gly411 each bind S-adenosyl-L-methionine.

The protein in the N-terminal section; belongs to the precorrin-2 dehydrogenase / sirohydrochlorin ferrochelatase family. This sequence in the C-terminal section; belongs to the precorrin methyltransferase family.

The enzyme catalyses uroporphyrinogen III + 2 S-adenosyl-L-methionine = precorrin-2 + 2 S-adenosyl-L-homocysteine + H(+). The catalysed reaction is precorrin-2 + NAD(+) = sirohydrochlorin + NADH + 2 H(+). It catalyses the reaction siroheme + 2 H(+) = sirohydrochlorin + Fe(2+). Its pathway is cofactor biosynthesis; adenosylcobalamin biosynthesis; precorrin-2 from uroporphyrinogen III: step 1/1. It functions in the pathway cofactor biosynthesis; adenosylcobalamin biosynthesis; sirohydrochlorin from precorrin-2: step 1/1. The protein operates within porphyrin-containing compound metabolism; siroheme biosynthesis; precorrin-2 from uroporphyrinogen III: step 1/1. It participates in porphyrin-containing compound metabolism; siroheme biosynthesis; siroheme from sirohydrochlorin: step 1/1. Its pathway is porphyrin-containing compound metabolism; siroheme biosynthesis; sirohydrochlorin from precorrin-2: step 1/1. Multifunctional enzyme that catalyzes the SAM-dependent methylations of uroporphyrinogen III at position C-2 and C-7 to form precorrin-2 via precorrin-1. Then it catalyzes the NAD-dependent ring dehydrogenation of precorrin-2 to yield sirohydrochlorin. Finally, it catalyzes the ferrochelation of sirohydrochlorin to yield siroheme. The polypeptide is Siroheme synthase (Shigella boydii serotype 18 (strain CDC 3083-94 / BS512)).